The sequence spans 407 residues: Acetate kinase (407 aa).

Asn10 contributes to the Mg(2+) binding site. Lys17 contributes to the ATP binding site. Substrate is bound at residue Arg91. Catalysis depends on Asp150, which acts as the Proton donor/acceptor. Residues 210-214, 285-287, and 338-342 each bind ATP; these read HLGNG, DCR, and GIGEN. Position 392 (Glu392) interacts with Mg(2+).

Belongs to the acetokinase family. Homodimer. Mg(2+) serves as cofactor. Requires Mn(2+) as cofactor.

It is found in the cytoplasm. The catalysed reaction is acetate + ATP = acetyl phosphate + ADP. It participates in metabolic intermediate biosynthesis; acetyl-CoA biosynthesis; acetyl-CoA from acetate: step 1/2. Catalyzes the formation of acetyl phosphate from acetate and ATP. Can also catalyze the reverse reaction. This is Acetate kinase from Mannheimia succiniciproducens (strain KCTC 0769BP / MBEL55E).